The primary structure comprises 254 residues: Alcohol dehydrogenase 2 (254 aa).

10-33 (FVAGLGGIGLDTSREIVKSGPKNL) is a binding site for NAD(+). Substrate is bound at residue serine 138. The active-site Proton acceptor is tyrosine 151.

It belongs to the short-chain dehydrogenases/reductases (SDR) family. Homodimer.

The catalysed reaction is a primary alcohol + NAD(+) = an aldehyde + NADH + H(+). It carries out the reaction a secondary alcohol + NAD(+) = a ketone + NADH + H(+). The chain is Alcohol dehydrogenase 2 (Adh2) from Drosophila montana (Fruit fly).